The sequence spans 407 residues: Transmembrane protein 184B (407 aa).

The interval 1-24 is disordered; the sequence is MTVRGAALAPDPASPTTAAASPSI. 7 helical membrane-spanning segments follow: residues 40 to 60, 84 to 104, 121 to 141, 178 to 198, 214 to 234, 249 to 269, and 290 to 310; these read FLMT…ALLI, ILFI…FFTN, LVIY…SSIM, LQFC…QAFG, VTII…LFYF, FFMV…LAIL, and VAAG…ALAL. Residues 369-395 form a disordered region; sequence TLEPGPTWRGGAHGLSRSHSLSGARDN. Ser388, Ser402, and Ser403 each carry phosphoserine.

It belongs to the TMEM184 family.

The protein localises to the membrane. May activate the MAP kinase signaling pathway. The chain is Transmembrane protein 184B (TMEM184B) from Bos taurus (Bovine).